Reading from the N-terminus, the 232-residue chain is Orotate phosphoribosyltransferase (232 aa).

5-phospho-alpha-D-ribose 1-diphosphate-binding positions include Arg107, Lys108, Lys111, His113, and 133–141 (EDLTTAGGS). Orotate is bound at residue Thr137.

This sequence belongs to the purine/pyrimidine phosphoribosyltransferase family. PyrE subfamily. Homodimer. Mg(2+) is required as a cofactor.

The enzyme catalyses orotidine 5'-phosphate + diphosphate = orotate + 5-phospho-alpha-D-ribose 1-diphosphate. It participates in pyrimidine metabolism; UMP biosynthesis via de novo pathway; UMP from orotate: step 1/2. Its function is as follows. Catalyzes the transfer of a ribosyl phosphate group from 5-phosphoribose 1-diphosphate to orotate, leading to the formation of orotidine monophosphate (OMP). The polypeptide is Orotate phosphoribosyltransferase (Rhizobium meliloti (strain 1021) (Ensifer meliloti)).